The chain runs to 355 residues: Septin-2B (355 aa).

Residues 33 to 305 enclose the Septin-type G domain; the sequence is KGFEFTLMVV…ENFRSERLKK (273 aa). Positions 43–50 are G1 motif; the sequence is GESGLGKS. GTP contacts are provided by residues 43–50, Thr77, Gly103, 182–190, Gly240, and Arg255; these read GESGLGKS and KADTLTLRE. Residues 100 to 103 are G3 motif; that stretch reads DTPG. The G4 motif stretch occupies residues 181 to 184; that stretch reads AKAD. The segment at 259–269 is important for dimerization; that stretch reads WGVVEVENPEH.

This sequence belongs to the TRAFAC class TrmE-Era-EngA-EngB-Septin-like GTPase superfamily. Septin GTPase family. In terms of assembly, septins polymerize into heterooligomeric protein complexes that form filaments, and associate with cellular membranes, actin filaments and microtubules. GTPase activity is required for filament formation. Can form heterooligomers with other family members and form filaments. Interacts with wdpcp.

It localises to the cytoplasm. Its subcellular location is the cytoskeleton. The protein resides in the spindle. It is found in the cleavage furrow. The protein localises to the midbody. It localises to the cell cortex. Its subcellular location is the cell projection. The protein resides in the cilium membrane. Its function is as follows. Filament-forming cytoskeletal GTPase. Required for normal organization of the actin cytoskeleton. Plays a role in the biogenesis of polarized columnar-shaped epithelium. Required for the progression through mitosis through regulation of chromosome congression. During anaphase, may be required for chromosome segregation and spindle elongation. Plays a role in ciliogenesis and collective cell movements including convergent extension during gastrulation. In cilia, required for the integrity of the diffusion barrier at the base of the primary cilium that prevents diffusion of transmembrane proteins between the cilia and plasma membranes. Controls cell shape and not polarization of cells during convergent extension. This is Septin-2B (sept2-B) from Xenopus tropicalis (Western clawed frog).